The following is a 108-amino-acid chain: Protein YcgL (108 aa).

In terms of domain architecture, YcgL spans 12-96 (MFCVIYRSSK…PPEDLLKQHL (85 aa)).

The sequence is that of Protein YcgL from Escherichia coli O17:K52:H18 (strain UMN026 / ExPEC).